The following is a 377-amino-acid chain: RING finger protein 215 (377 aa).

Residues M1–P22 lie on the Cytoplasmic side of the membrane. Residues M1–P22 form a disordered region. Pro residues predominate over residues R10 to P22. Residues L23–A43 traverse the membrane as a helical segment. The Extracellular segment spans residues D44–P250. N-linked (GlcNAc...) asparagine glycosylation occurs at N186. The chain crosses the membrane as a helical span at residues L251 to V271. The Cytoplasmic portion of the chain corresponds to Q272 to D377. The RING-type; atypical zinc finger occupies C325 to K366.

Its subcellular location is the membrane. The sequence is that of RING finger protein 215 (RNF215) from Homo sapiens (Human).